Here is a 128-residue protein sequence, read N- to C-terminus: Glycine cleavage system H protein (128 aa).

In terms of domain architecture, Lipoyl-binding spans 22–104 (TVLVGITDYA…YGEGWIFRLK (83 aa)). Position 63 is an N6-lipoyllysine (Lys63).

This sequence belongs to the GcvH family. As to quaternary structure, the glycine cleavage system is composed of four proteins: P, T, L and H. (R)-lipoate is required as a cofactor.

In terms of biological role, the glycine cleavage system catalyzes the degradation of glycine. The H protein shuttles the methylamine group of glycine from the P protein to the T protein. This chain is Glycine cleavage system H protein, found in Thermus thermophilus (strain ATCC BAA-163 / DSM 7039 / HB27).